The sequence spans 455 residues: UDP-N-acetylmuramate--L-alanine ligase (455 aa).

Residue 109 to 115 (GTHGKTT) participates in ATP binding.

Belongs to the MurCDEF family.

The protein resides in the cytoplasm. It carries out the reaction UDP-N-acetyl-alpha-D-muramate + L-alanine + ATP = UDP-N-acetyl-alpha-D-muramoyl-L-alanine + ADP + phosphate + H(+). The protein operates within cell wall biogenesis; peptidoglycan biosynthesis. In terms of biological role, cell wall formation. The protein is UDP-N-acetylmuramate--L-alanine ligase of Caldicellulosiruptor bescii (strain ATCC BAA-1888 / DSM 6725 / KCTC 15123 / Z-1320) (Anaerocellum thermophilum).